Reading from the N-terminus, the 248-residue chain is Probable transcriptional regulatory protein Ccel_0181 (248 aa).

This sequence belongs to the TACO1 family.

Its subcellular location is the cytoplasm. In Ruminiclostridium cellulolyticum (strain ATCC 35319 / DSM 5812 / JCM 6584 / H10) (Clostridium cellulolyticum), this protein is Probable transcriptional regulatory protein Ccel_0181.